The following is a 147-amino-acid chain: Large ribosomal subunit protein uL13 (147 aa).

This sequence belongs to the universal ribosomal protein uL13 family. In terms of assembly, part of the 50S ribosomal subunit.

Functionally, this protein is one of the early assembly proteins of the 50S ribosomal subunit, although it is not seen to bind rRNA by itself. It is important during the early stages of 50S assembly. This chain is Large ribosomal subunit protein uL13, found in Leuconostoc citreum (strain KM20).